We begin with the raw amino-acid sequence, 245 residues long: tRNA1(Val) (adenine(37)-N6)-methyltransferase (245 aa).

The protein belongs to the methyltransferase superfamily. tRNA (adenine-N(6)-)-methyltransferase family.

The protein resides in the cytoplasm. It catalyses the reaction adenosine(37) in tRNA1(Val) + S-adenosyl-L-methionine = N(6)-methyladenosine(37) in tRNA1(Val) + S-adenosyl-L-homocysteine + H(+). Its function is as follows. Specifically methylates the adenine in position 37 of tRNA(1)(Val) (anticodon cmo5UAC). The sequence is that of tRNA1(Val) (adenine(37)-N6)-methyltransferase from Shigella sonnei (strain Ss046).